A 269-amino-acid chain; its full sequence is Adenylate kinase (269 aa).

61-66 contributes to the ATP binding site; the sequence is GAGKGT. The segment at 81–110 is NMP; sequence ATGDMLREQVARQTELGKAAKQIMDQGGLV. Residues threonine 82, arginine 87, 108–110, 137–140, and glutamine 144 each bind AMP; these read GLV and GFPR. Residues 178 to 215 form an LID region; it reads GRLVHPASGRSYHKEFNPPKKPMTDDITGEPLIQRSDD. Residues arginine 179 and 188 to 189 each bind ATP; that span reads SY. Positions 212 and 223 each coordinate AMP. An ATP-binding site is contributed by glutamine 251.

The protein belongs to the adenylate kinase family. AK2 subfamily. In terms of assembly, monomer.

It localises to the cytoplasm. Its subcellular location is the cytosol. The protein resides in the mitochondrion intermembrane space. It catalyses the reaction AMP + ATP = 2 ADP. In terms of biological role, catalyzes the reversible transfer of the terminal phosphate group between ATP and AMP. Plays an important role in cellular energy homeostasis and in adenine nucleotide metabolism. Adenylate kinase activity is critical for regulation of the phosphate utilization and the AMP de novo biosynthesis pathways. In Cryptococcus neoformans var. neoformans serotype D (strain B-3501A) (Filobasidiella neoformans), this protein is Adenylate kinase.